Consider the following 220-residue polypeptide: Adenylate kinase (220 aa).

10–15 (GSGKST) lines the ATP pocket. An NMP region spans residues 30–59 (SSGDLIRKEIAEGTPLGREMQAYLARGDLI). Residues S31, R36, 57–59 (DLI), 83–86 (GYPR), and Q90 contribute to the AMP site. The interval 124–161 (GRRICPKCGAVYHVEFNPPKIPGRCDVCGAELVQREDD) is LID. Residue R125 coordinates ATP. Zn(2+)-binding residues include C128 and C131. Position 134-135 (134-135 (VY)) interacts with ATP. Residues C148 and C151 each coordinate Zn(2+). Positions 158 and 169 each coordinate AMP. ATP is bound at residue G197.

It belongs to the adenylate kinase family. As to quaternary structure, monomer.

Its subcellular location is the cytoplasm. The catalysed reaction is AMP + ATP = 2 ADP. Its pathway is purine metabolism; AMP biosynthesis via salvage pathway; AMP from ADP: step 1/1. Catalyzes the reversible transfer of the terminal phosphate group between ATP and AMP. Plays an important role in cellular energy homeostasis and in adenine nucleotide metabolism. This chain is Adenylate kinase, found in Pyrococcus furiosus (strain ATCC 43587 / DSM 3638 / JCM 8422 / Vc1).